The sequence spans 926 residues: Protein transport protein SEC24-2 (926 aa).

A disordered region spans residues 1-54; sequence MSHHKKRVYPQAQAQYGQSATPLQQPAQLVPPQDPAAAGMSYAQMGMPPQGAAA. Positions 20–54 are enriched in low complexity; sequence ATPLQQPAQLVPPQDPAAAGMSYAQMGMPPQGAAA. C231, C234, C253, and C256 together coordinate Zn(2+). Residues 231 to 256 form a zinc finger-like region; it reads CRRCRSYMNPFITFIEQGRRWRCNFC.

The protein belongs to the SEC23/SEC24 family. SEC24 subfamily. As to quaternary structure, the COPII coat is composed of at least 5 proteins: the SEC23/24 complex, the SEC13/31 complex, and the protein SAR1. Golgi apparatus membrane; Peripheral membrane protein; Cytoplasmic side.

It is found in the cytoplasm. It localises to the cytoplasmic vesicle. The protein resides in the COPII-coated vesicle membrane. The protein localises to the endoplasmic reticulum membrane. Its subcellular location is the golgi apparatus membrane. Component of the coat protein complex II (COPII) which promotes the formation of transport vesicles from the endoplasmic reticulum (ER). The coat has two main functions, the physical deformation of the endoplasmic reticulum membrane into vesicles and the selection of cargo molecules. The sequence is that of Protein transport protein SEC24-2 (SEC242) from Saccharomyces uvarum (strain ATCC 76518 / CBS 7001 / CLIB 283 / NBRC 10550 / MCYC 623 / NCYC 2669 / NRRL Y-11845) (Yeast).